Here is a 747-residue protein sequence, read N- to C-terminus: Anoctamin-9 (747 aa).

Topologically, residues 1–193 (MQDDESSQIF…LYFTWLGWYT (193 aa)) are cytoplasmic. A helical transmembrane segment spans residues 194 to 214 (YMLVPAAVVGLIVFLSGFALF). At 215–259 (DSSQISKEICSANDIFMCPLGDHSHRYLRLSEMCTFAKLTHLFDN) the chain is on the extracellular side. Residue Ser-245 is modified to Phosphoserine; by PKA. Residues 260–280 (EGTVLFAIFMALWATVFLEIW) traverse the membrane as a helical segment. Residues 281–326 (KRKRAHEVQSWKLYEWDEEEEEMALELINSPHYKLKDHRHSYLSST) are Cytoplasmic-facing. The helical transmembrane segment at 327 to 347 (IILILSLFMICLMIGMAHVLV) threads the bilayer. Residues 348–364 (VYRVLAGALFSSLVKQQ) are Extracellular-facing. A helical transmembrane segment spans residues 365 to 385 (VTTAVVVTGAVVHYIIIVIMT). The Cytoplasmic portion of the chain corresponds to 386-414 (KVNKYVALKLCKFEESGTFSEQERKFTVK). Residues 415-435 (FFILQFFAHFSSLIYIAFILG) form a helical membrane-spanning segment. Residues 436–543 (RINGHPGKST…EMMIQYGFTT (108 aa)) are Extracellular-facing. A helical transmembrane segment spans residues 544–564 (IFVAAFPLAPLLALFSNLVEI). Topologically, residues 565–595 (RLDAIKMVRLQRRLVPRKAKDIGTWLQVLET) are cytoplasmic. A helical transmembrane segment spans residues 596–616 (IGVLAVIANGMVIAFTSEFIP). Over 617 to 695 (RVVYKYHYGP…FWFILAIRLT (79 aa)) the chain is Extracellular. Asn-630, Asn-643, Asn-665, and Asn-681 each carry an N-linked (GlcNAc...) asparagine glycan. Residues 696 to 716 (FVILFEHFALCIKLIAAWFVP) form a helical membrane-spanning segment. The Cytoplasmic segment spans residues 717–747 (DVPQKVKNEVLQEKYDRIRHRMRFSSRSTDV).

This sequence belongs to the anoctamin family. Post-translationally, phosphorylation on Ser-245 by cAMP-dependent protein kinase A (PKA)is essential for activation of its cation channel activity. As to expression, highly expressed in the olfactory epithelium, particularly in mature olfactory sensory neurons (at protein level). Expressed in the kidney (at protein level). Predominant expression seen in epithelial tissues. Highly expressed in the small intestine, colon and stomach.

It localises to the cell membrane. The protein resides in the endoplasmic reticulum. It carries out the reaction a 1,2-diacyl-sn-glycero-3-phospho-L-serine(in) = a 1,2-diacyl-sn-glycero-3-phospho-L-serine(out). It catalyses the reaction a beta-D-galactosyl-(1&lt;-&gt;1')-N-acylsphing-4-enine(out) = a beta-D-galactosyl-(1&lt;-&gt;1')-N-acylsphing-4-enine(in). The catalysed reaction is a 1,2-diacyl-sn-glycero-3-phosphocholine(in) = a 1,2-diacyl-sn-glycero-3-phosphocholine(out). The enzyme catalyses Ca(2+)(in) = Ca(2+)(out). It carries out the reaction Na(+)(in) = Na(+)(out). It catalyses the reaction K(+)(in) = K(+)(out). Cation channel activity is activated via phosphorylation on Ser-245 by cAMP-dependent protein kinase A (PKA). Inhibited by NaCl. PKA-activated nonselective cation channel. Discriminates poorly among cations but is more permeable to Ca(2+) ions than to monovalent cations. Acts as a calcium-activated calcium permeable channel which may operate as a endoplasmic reticulum (ER) Ca(2+)-leak channel, reducing the loading of the ER Ca(2+) store. Regulates intracellular Ca2+ signals, ion channel activity, and cytokine release in the renal tissue. Plays an important role in olfaction, amplifying cAMP-evoked cyclic nucleotide-gated (CNG) channel currents in the olfactory sensory neurons. Has calcium-dependent phospholipid scramblase activity; scrambles phosphatidylserine, phosphatidylcholine and galactosylceramide. Does not exhibit calcium-activated chloride channel (CaCC) activity. Can inhibit the activity of ANO1. The sequence is that of Anoctamin-9 from Mus musculus (Mouse).